The chain runs to 600 residues: Transcription factor rlmA (600 aa).

Residues Met1–Asp61 enclose the MADS-box domain. 2 disordered regions span residues Tyr71–Thr518 and Gly544–Thr600. A compositionally biased stretch (basic and acidic residues) spans Pro75 to Asp89. A compositionally biased stretch (polar residues) spans Pro151 to Ser160. Residues Gln222 to His242 are compositionally biased toward pro residues. The span at Gln243–Pro260 shows a compositional bias: low complexity. The segment covering His328–Ile339 has biased composition (polar residues). Basic and acidic residues predominate over residues Pro364–Lys384. The segment covering Pro386–Arg397 has biased composition (pro residues). Residues Arg440–Gly452 are compositionally biased toward low complexity. A compositionally biased stretch (polar residues) spans Asn453–Ser468. Positions Pro490–Gly501 are enriched in pro residues. The span at Ala503 to Asn515 shows a compositional bias: low complexity.

This sequence belongs to the MEF2 family. As to quaternary structure, interacts with hsp90. Phosphorylation during asexual development.

It is found in the nucleus. Its function is as follows. Transcription factor; part of cell wall integrity (CWI) signaling pathway composed of pkcA, the bck1-mkk2-mpka MAPK cascade and the downstream rlmA transcription regulator. The CWI signaling pathway regulates cell wall integrity and pyomelanin formation. CWI also controls oxidative stress response, gliotoxin production, iron adaptation and asexual development. Finally, CWI is constitutively required for A.fumigatus to cope with the temperature increase found in the mammalian lung environment, during infection. Positively regulates the phosphorylation of mpkA. Involved in tolerance to oxidative damage and transcriptional regulation of genes related to oxidative stress adaptation. Directly regulates the expression of regulators of conidiation, including flbB, flbC, brlA, abaA, and rasB, as well as genes involved in cell wall synthesis and remodeling. Specifically associates with the target fumiquinazoline (fmq) cluster genes promoters at conserved motifs (5'-TAWWWWTA-3') during conidiation to supplement mature conidia with fumiquinazoline C. Also controls the DHN-melanin production via binding the promoter of pksP. The protein is Transcription factor rlmA of Aspergillus fumigatus (strain ATCC MYA-4609 / CBS 101355 / FGSC A1100 / Af293) (Neosartorya fumigata).